A 293-amino-acid chain; its full sequence is Glycine N-methyltransferase (293 aa).

Residue valine 2 is modified to N-acetylvaline. Serine 4 and tyrosine 6 together coordinate (6S)-5-methyl-5,6,7,8-tetrahydrofolate. Serine 10 is modified (phosphoserine). S-adenosyl-L-methionine is bound by residues tyrosine 22, tryptophan 31, tyrosine 34, and arginine 41. Residue tyrosine 34 is modified to Phosphotyrosine. Lysine 46 bears the N6-succinyllysine mark. S-adenosyl-L-methionine-binding positions include alanine 65, 86–88 (DAS), 117–118 (NW), leucine 137, 137–140 (LGNS), and arginine 176. Residues lysine 191, lysine 196, and lysine 201 each carry the N6-succinyllysine modification. Residue histidine 215 coordinates (6S)-5-methyl-5,6,7,8-tetrahydrofolate. Tyrosine 221 is a binding site for S-adenosyl-L-methionine. Arginine 240 is a binding site for (6S)-5-methyl-5,6,7,8-tetrahydrofolate.

Belongs to the class I-like SAM-binding methyltransferase superfamily. Glycine N-methyltransferase family. Homotetramer.

The protein resides in the cytoplasm. It catalyses the reaction glycine + S-adenosyl-L-methionine = sarcosine + S-adenosyl-L-homocysteine + H(+). Its activity is regulated as follows. Inhibited by 5-methyltetrahydrofolate monoglutamate and by 5-methyltetrahydrofolate pentaglutamate, inhibition is much more effective by the pentaglutamate form than by the monoglutamate form. Two molecules of 5-methyltetrahydrofolate are bound per tetramer. The binding sites are localized between subunits. Inhibitor binding may preclude movements of the polypeptide chain that are necessary for enzyme activity. In terms of biological role, catalyzes the methylation of glycine by using S-adenosylmethionine (AdoMet) to form N-methylglycine (sarcosine) with the concomitant production of S-adenosylhomocysteine (AdoHcy), a reaction regulated by the binding of 5-methyltetrahydrofolate. Plays an important role in the regulation of methyl group metabolism by regulating the ratio between S-adenosyl-L-methionine and S-adenosyl-L-homocysteine. The sequence is that of Glycine N-methyltransferase (Gnmt) from Mus musculus (Mouse).